We begin with the raw amino-acid sequence, 150 residues long: Allograft inflammatory factor 1-like (150 aa).

At Ser-2 the chain carries N-acetylserine. At Ser-2 the chain carries Phosphoserine. Residues 47-82 enclose the EF-hand 1 domain; it reads EKLTAFKEKYMEFDLNNEGEIDLMSLKRMMEKLGVP. Residues Asp-60, Asn-62, Glu-64, and Glu-66 each contribute to the Ca(2+) site. The EF-hand 2; degenerate domain occupies 83 to 117; the sequence is KTHLEMKKMISEVTGGVSDTISYRDFVNMMLGKRS. A disordered region spans residues 129 to 150; sequence KANESSPKPVGPPPERDIASLP. Ser-134 carries the post-translational modification Phosphoserine.

Homodimer (Potential). Monomer.

It is found in the cytoplasm. The protein localises to the cytoskeleton. Its subcellular location is the cell projection. The protein resides in the ruffle membrane. In terms of biological role, actin-binding protein that promotes actin bundling. May neither bind calcium nor depend on calcium for function. This Homo sapiens (Human) protein is Allograft inflammatory factor 1-like (AIF1L).